A 239-amino-acid chain; its full sequence is Prolyl hydroxylase EGLN3 (239 aa).

The beta(2)beta(3) 'finger-like' loop stretch occupies residues 62–73 (AGPRAGVSKRHL). Residues 88 to 104 (CEAINFLLSLIDRLVLY) are required for interaction with ADRB2. The Fe2OG dioxygenase domain maps to 116–214 (ERSKAMVACY…RYAMTVWYFD (99 aa)). 3 residues coordinate Fe cation: His-135, Asp-137, and His-196. Arg-205 serves as a coordination point for 2-oxoglutarate.

Interacts with ADRB2; the interaction hydroxylates ADRB2 facilitating its ubiquitination by the VHL-E3 ligase complex. Interacts with PKM; the interaction hydroxylates PKM in hypoxia. Interacts with WDR83; the interaction leads to almost complete elimination of HIF-mediated reporter activity. Interacts with BCL2 (via its BH4 domain); the interaction disrupts the BAX-BCL4 complex inhibiting the anti-apoptotic activity of BCL2. Interacts with LIMD1, WTIP and AJUBA. Requires Fe(2+) as cofactor. L-ascorbate serves as cofactor. Post-translationally, ubiquitinated by SIAH1 and/or SIAH2 in response to the unfolded protein response (UPR), leading to its degradation. In terms of tissue distribution, highly expressed in cardiac and smooth muscle. Also high expression in brain, skeletal muscle and kidney. Low levels in lung.

The protein localises to the nucleus. It is found in the cytoplasm. It carries out the reaction L-prolyl-[protein] + 2-oxoglutarate + O2 = trans-4-hydroxy-L-prolyl-[protein] + succinate + CO2. It catalyses the reaction L-prolyl-[hypoxia-inducible factor alpha subunit] + 2-oxoglutarate + O2 = trans-4-hydroxy-L-prolyl-[hypoxia-inducible factor alpha subunit] + succinate + CO2. Functionally, prolyl hydroxylase that mediates hydroxylation of proline residues in target proteins, such as PKM, TELO2, ATF4 and HIF1A. Target proteins are preferentially recognized via a LXXLAP motif. Cellular oxygen sensor that catalyzes, under normoxic conditions, the post-translational formation of 4-hydroxyproline in hypoxia-inducible factor (HIF) alpha proteins. Hydroxylates a specific proline found in each of the oxygen-dependent degradation (ODD) domains (N-terminal, NODD, and C-terminal, CODD) of HIF1A. Also hydroxylates HIF2A. Has a preference for the CODD site for both HIF1A and HIF2A. Hydroxylation on the NODD site by EGLN3 appears to require prior hydroxylation on the CODD site. Hydroxylated HIFs are then targeted for proteasomal degradation via the von Hippel-Lindau ubiquitination complex. Under hypoxic conditions, the hydroxylation reaction is attenuated allowing HIFs to escape degradation resulting in their translocation to the nucleus, heterodimerization with HIF1B, and increased expression of hypoxy-inducible genes. ELGN3 is the most important isozyme in limiting physiological activation of HIFs (particularly HIF2A) in hypoxia. Also hydroxylates PKM in hypoxia, limiting glycolysis. Under normoxia, hydroxylates and regulates the stability of ADRB2. Regulator of cardiomyocyte and neuronal apoptosis. In cardiomyocytes, inhibits the anti-apoptotic effect of BCL2 by disrupting the BAX-BCL2 complex. In neurons, has a NGF-induced proapoptotic effect, probably through regulating CASP3 activity. Also essential for hypoxic regulation of neutrophilic inflammation. Plays a crucial role in DNA damage response (DDR) by hydroxylating TELO2, promoting its interaction with ATR which is required for activation of the ATR/CHK1/p53 pathway. Also mediates hydroxylation of ATF4, leading to decreased protein stability of ATF4. In Mus musculus (Mouse), this protein is Prolyl hydroxylase EGLN3.